Here is an 85-residue protein sequence, read N- to C-terminus: MILALGDFLPKQEDKACERPWVQFPARPVIFFHHQGGIFLFSINQPNLSCFSKLKEVNSLYVRVATYICQKNESRFRTNRLKGDQ.

This is an uncharacterized protein from Saccharomyces cerevisiae (strain ATCC 204508 / S288c) (Baker's yeast).